Reading from the N-terminus, the 84-residue chain is Putative antitoxin RelB4 (84 aa).

In terms of biological role, antitoxin component of a type II toxin-antitoxin (TA) system. Its cognate toxin is RelE4 (Potential). The sequence is that of Putative antitoxin RelB4 (relB4) from Methanocaldococcus jannaschii (strain ATCC 43067 / DSM 2661 / JAL-1 / JCM 10045 / NBRC 100440) (Methanococcus jannaschii).